Here is a 319-residue protein sequence, read N- to C-terminus: ADP-L-glycero-D-manno-heptose-6-epimerase (319 aa).

Residues 10 to 11 (FI), 31 to 32 (DD), K38, K53, and 79 to 83 (EGACS) each bind NADP(+). The Proton acceptor role is filled by Y144. Residue K148 coordinates NADP(+). Substrate is bound at residue N173. Positions 174 and 182 each coordinate NADP(+). K182 acts as the Proton acceptor in catalysis. Substrate is bound by residues S184, H191, 205–208 (FEGC), R218, and Y282.

The protein belongs to the NAD(P)-dependent epimerase/dehydratase family. HldD subfamily. As to quaternary structure, homopentamer. It depends on NADP(+) as a cofactor.

The enzyme catalyses ADP-D-glycero-beta-D-manno-heptose = ADP-L-glycero-beta-D-manno-heptose. Its pathway is nucleotide-sugar biosynthesis; ADP-L-glycero-beta-D-manno-heptose biosynthesis; ADP-L-glycero-beta-D-manno-heptose from D-glycero-beta-D-manno-heptose 7-phosphate: step 4/4. Functionally, catalyzes the interconversion between ADP-D-glycero-beta-D-manno-heptose and ADP-L-glycero-beta-D-manno-heptose via an epimerization at carbon 6 of the heptose. The polypeptide is ADP-L-glycero-D-manno-heptose-6-epimerase (Aeromonas salmonicida (strain A449)).